Reading from the N-terminus, the 522-residue chain is ATP synthase subunit alpha 2 (522 aa).

176 to 183 (GDRQTGKT) is a binding site for ATP.

It belongs to the ATPase alpha/beta chains family. As to quaternary structure, F-type ATPases have 2 components, CF(1) - the catalytic core - and CF(0) - the membrane proton channel. CF(1) has five subunits: alpha(3), beta(3), gamma(1), delta(1), epsilon(1). CF(0) has three main subunits: a(1), b(2) and c(9-12). The alpha and beta chains form an alternating ring which encloses part of the gamma chain. CF(1) is attached to CF(0) by a central stalk formed by the gamma and epsilon chains, while a peripheral stalk is formed by the delta and b chains.

The protein localises to the cell inner membrane. It carries out the reaction ATP + H2O + 4 H(+)(in) = ADP + phosphate + 5 H(+)(out). Its function is as follows. Produces ATP from ADP in the presence of a proton gradient across the membrane. The alpha chain is a regulatory subunit. This chain is ATP synthase subunit alpha 2, found in Syntrophotalea carbinolica (strain DSM 2380 / NBRC 103641 / GraBd1) (Pelobacter carbinolicus).